The following is a 1211-amino-acid chain: RNA helicase Mov10l1 (1211 aa).

Disordered stretches follow at residues 340–385 (KENS…GENG) and 674–710 (WNHAQDTKSSGQSTSKKNRKTMTDQAEHGTEERRVGD). Composition is skewed to polar residues over residues 345–372 (DENINSLNSHTKNKTSQMSESSLVNNRG) and 674–688 (WNHAQDTKSSGQSTS). Residues 694-710 (TMTDQAEHGTEERRVGD) are compositionally biased toward basic and acidic residues. An ATP-binding site is contributed by 770–777 (GPPGTGKT). The DEAG box signature appears at 886-889 (DEAG). Residues 1192-1211 (DPSYPVVPESTGPEKHQEPS) form a disordered region.

The protein belongs to the DNA2/NAM7 helicase family. SDE3 subfamily. In terms of assembly, interacts with PIWIL1. Interacts with PIWIL2. Interacts with PIWIL4. Interacts with HSPA2. Interacts with PLD6. As to expression, specifically expressed in testis.

The protein resides in the cytoplasm. The catalysed reaction is ATP + H2O = ADP + phosphate + H(+). Its function is as follows. ATP-dependent RNA helicase required during spermatogenesis to repress transposable elements and prevent their mobilization, which is essential for germline integrity. Acts via the piRNA metabolic process, which mediates the repression of transposable elements during meiosis by forming complexes composed of piRNAs and Piwi proteins and governs the methylation and subsequent repression of transposons. Involved in the primary piRNA metabolic process. Specifically binds to piRNA precursors and promotes the generation of intermediate piRNA processing fragments that are subsequently loaded to Piwi proteins. Acts via its ATP-dependent RNA helicase activity: displays 5'-3' RNA unwinding activity and probably mediates unwinding and funneling of single-stranded piRNA precursor transcripts to the endonuclease that catalyzes the first cleavage step of piRNA processing to generate piRNA intermediate fragments that are subsequently loaded to Piwi proteins. The sequence is that of RNA helicase Mov10l1 from Homo sapiens (Human).